The primary structure comprises 292 residues: Elongation factor Ts (292 aa).

Positions 82–85 are involved in Mg(2+) ion dislocation from EF-Tu; sequence TDFV.

It belongs to the EF-Ts family.

The protein resides in the cytoplasm. Functionally, associates with the EF-Tu.GDP complex and induces the exchange of GDP to GTP. It remains bound to the aminoacyl-tRNA.EF-Tu.GTP complex up to the GTP hydrolysis stage on the ribosome. The polypeptide is Elongation factor Ts (Legionella pneumophila (strain Lens)).